The primary structure comprises 241 residues: Probable septum site-determining protein MinC (241 aa).

Residues 109–135 form a disordered region; it reads PSGARERKVDPSSKTPAKPAEPTYRPT.

It belongs to the MinC family. As to quaternary structure, interacts with MinD and FtsZ.

In terms of biological role, cell division inhibitor that blocks the formation of polar Z ring septums. Rapidly oscillates between the poles of the cell to destabilize FtsZ filaments that have formed before they mature into polar Z rings. Prevents FtsZ polymerization. This chain is Probable septum site-determining protein MinC, found in Stutzerimonas stutzeri (strain A1501) (Pseudomonas stutzeri).